A 197-amino-acid polypeptide reads, in one-letter code: Glycerol-3-phosphate acyltransferase (197 aa).

Helical transmembrane passes span 2–22, 53–73, 78–98, 112–132, and 152–174; these read LDVI…AIVV, AGIT…LAWL, PVVA…PVYF, VILA…LAVA, and YMLW…AAIV.

Belongs to the PlsY family. As to quaternary structure, probably interacts with PlsX.

The protein localises to the cell inner membrane. It catalyses the reaction an acyl phosphate + sn-glycerol 3-phosphate = a 1-acyl-sn-glycero-3-phosphate + phosphate. Its pathway is lipid metabolism; phospholipid metabolism. In terms of biological role, catalyzes the transfer of an acyl group from acyl-phosphate (acyl-PO(4)) to glycerol-3-phosphate (G3P) to form lysophosphatidic acid (LPA). This enzyme utilizes acyl-phosphate as fatty acyl donor, but not acyl-CoA or acyl-ACP. The chain is Glycerol-3-phosphate acyltransferase from Halorhodospira halophila (strain DSM 244 / SL1) (Ectothiorhodospira halophila (strain DSM 244 / SL1)).